Consider the following 148-residue polypeptide: F420H(2)-dependent quinone reductase MT1609 (148 aa).

Residues 46 to 48, 52 to 57, 68 to 71, 79 to 83, and tyrosine 125 contribute to the coenzyme F420-(gamma-Glu)n site; these read AKT, RKTPLM, VASL, and VWYHN.

The protein belongs to the F420H(2)-dependent quinone reductase family.

The protein resides in the cell membrane. The enzyme catalyses oxidized coenzyme F420-(gamma-L-Glu)(n) + a quinol + H(+) = reduced coenzyme F420-(gamma-L-Glu)(n) + a quinone. Its function is as follows. Involved in a F420-dependent anti-oxidant mechanism that protects M.tuberculosis against oxidative stress and bactericidal agents. Catalyzes the F420H(2)-dependent two-electron reduction of quinones to dihydroquinones, thereby preventing the formation of cytotoxic semiquinones obtained by the one-electron reduction pathway. In vitro, catalyzes the reduction of menadione to menadiol; since menaquinone is the sole quinone electron carrier in the respiratory chain in M.tuberculosis, the physiological electron acceptor for Fqr-mediated F420H(2) oxidation is therefore likely to be the endogenous menaquinone found in the membrane fraction of M.tuberculosis. This chain is F420H(2)-dependent quinone reductase MT1609, found in Mycobacterium tuberculosis (strain CDC 1551 / Oshkosh).